A 100-amino-acid polypeptide reads, in one-letter code: Ribosomal processing cysteine protease Prp (100 aa).

Catalysis depends on His-16, which acts as the Proton donor. Cys-28 serves as the catalytic Nucleophile.

It belongs to the Prp family. Homodimer.

Functionally, an essential cysteine protease that cleaves the N-terminus from ribosomal protein bL27. This is Ribosomal processing cysteine protease Prp from Mycoplasma pneumoniae (strain ATCC 29342 / M129 / Subtype 1) (Mycoplasmoides pneumoniae).